The primary structure comprises 280 residues: Putative pyruvate, phosphate dikinase regulatory protein 1 (280 aa).

An ADP-binding site is contributed by 152 to 159 (GVSRTSKT).

The protein belongs to the pyruvate, phosphate/water dikinase regulatory protein family. PDRP subfamily.

It carries out the reaction N(tele)-phospho-L-histidyl/L-threonyl-[pyruvate, phosphate dikinase] + ADP = N(tele)-phospho-L-histidyl/O-phospho-L-threonyl-[pyruvate, phosphate dikinase] + AMP + H(+). The enzyme catalyses N(tele)-phospho-L-histidyl/O-phospho-L-threonyl-[pyruvate, phosphate dikinase] + phosphate + H(+) = N(tele)-phospho-L-histidyl/L-threonyl-[pyruvate, phosphate dikinase] + diphosphate. Functionally, bifunctional serine/threonine kinase and phosphorylase involved in the regulation of the pyruvate, phosphate dikinase (PPDK) by catalyzing its phosphorylation/dephosphorylation. This is Putative pyruvate, phosphate dikinase regulatory protein 1 from Latilactobacillus sakei subsp. sakei (strain 23K) (Lactobacillus sakei subsp. sakei).